The primary structure comprises 318 residues: Glutathione synthetase (318 aa).

One can recognise an ATP-grasp domain in the interval 128–313 (KLAILNFSRF…VAAMFADAVA (186 aa)). 154–210 (LKEHGDIIIKPLDGMGGMGIFRLTEKDPNIGSILETLMQLDSRTIMAQRYIPEIVHG) contributes to the ATP binding site. Mg(2+) contacts are provided by glutamate 284 and asparagine 286.

Belongs to the prokaryotic GSH synthase family. It depends on Mg(2+) as a cofactor. Requires Mn(2+) as cofactor.

It carries out the reaction gamma-L-glutamyl-L-cysteine + glycine + ATP = glutathione + ADP + phosphate + H(+). Its pathway is sulfur metabolism; glutathione biosynthesis; glutathione from L-cysteine and L-glutamate: step 2/2. The protein is Glutathione synthetase of Neisseria meningitidis serogroup A / serotype 4A (strain DSM 15465 / Z2491).